Consider the following 179-residue polypeptide: ATP-dependent protease subunit HslV (179 aa).

Thr-5 is an active-site residue. 2 residues coordinate Na(+): Cys-164 and Thr-167.

The protein belongs to the peptidase T1B family. HslV subfamily. A double ring-shaped homohexamer of HslV is capped on each side by a ring-shaped HslU homohexamer. The assembly of the HslU/HslV complex is dependent on binding of ATP.

Its subcellular location is the cytoplasm. The catalysed reaction is ATP-dependent cleavage of peptide bonds with broad specificity.. Its activity is regulated as follows. Allosterically activated by HslU binding. Its function is as follows. Protease subunit of a proteasome-like degradation complex believed to be a general protein degrading machinery. This is ATP-dependent protease subunit HslV from Carboxydothermus hydrogenoformans (strain ATCC BAA-161 / DSM 6008 / Z-2901).